The following is a 485-amino-acid chain: UDP-N-acetylmuramate--L-alanine ligase (485 aa).

129 to 135 (GTHGKTT) is a binding site for ATP.

Belongs to the MurCDEF family.

It is found in the cytoplasm. It carries out the reaction UDP-N-acetyl-alpha-D-muramate + L-alanine + ATP = UDP-N-acetyl-alpha-D-muramoyl-L-alanine + ADP + phosphate + H(+). It functions in the pathway cell wall biogenesis; peptidoglycan biosynthesis. In terms of biological role, cell wall formation. The chain is UDP-N-acetylmuramate--L-alanine ligase from Vibrio parahaemolyticus serotype O3:K6 (strain RIMD 2210633).